We begin with the raw amino-acid sequence, 156 residues long: Transcription antitermination protein NusB (156 aa).

This sequence belongs to the NusB family.

Involved in transcription antitermination. Required for transcription of ribosomal RNA (rRNA) genes. Binds specifically to the boxA antiterminator sequence of the ribosomal RNA (rrn) operons. The chain is Transcription antitermination protein NusB from Clostridium kluyveri (strain ATCC 8527 / DSM 555 / NBRC 12016 / NCIMB 10680 / K1).